The primary structure comprises 297 residues: T-cell leukemia homeobox protein 1 (297 aa).

Residues Asp153–Ser174 form a disordered region. The homeobox DNA-binding region spans Lys168–Thr227.

It localises to the nucleus. Functionally, seems to be involved in the development of cranial sensory innervation from peripheral ganglia. The protein is T-cell leukemia homeobox protein 1 (TLX1) of Gallus gallus (Chicken).